The chain runs to 271 residues: Type III pantothenate kinase (271 aa).

Residue 6 to 13 (DVRNTHTV) coordinates ATP. A substrate-binding site is contributed by 109–112 (GADR). D111 serves as the catalytic Proton acceptor. D131 is a K(+) binding site. S134 serves as a coordination point for ATP. T186 is a substrate binding site.

Belongs to the type III pantothenate kinase family. In terms of assembly, homodimer. NH4(+) is required as a cofactor. It depends on K(+) as a cofactor.

Its subcellular location is the cytoplasm. It carries out the reaction (R)-pantothenate + ATP = (R)-4'-phosphopantothenate + ADP + H(+). It participates in cofactor biosynthesis; coenzyme A biosynthesis; CoA from (R)-pantothenate: step 1/5. In terms of biological role, catalyzes the phosphorylation of pantothenate (Pan), the first step in CoA biosynthesis. This is Type III pantothenate kinase from Mycolicibacterium vanbaalenii (strain DSM 7251 / JCM 13017 / BCRC 16820 / KCTC 9966 / NRRL B-24157 / PYR-1) (Mycobacterium vanbaalenii).